The following is a 307-amino-acid chain: Probable aspartoacylase (307 aa).

His-13 and Glu-16 together coordinate Zn(2+). Substrate is bound by residues Arg-55 and 62-63 (NR). Zn(2+) is bound at residue His-105. Substrate contacts are provided by Glu-163 and Tyr-276.

It belongs to the AspA/AstE family. Aspartoacylase subfamily. Requires Zn(2+) as cofactor.

The catalysed reaction is an N-acyl-L-aspartate + H2O = a carboxylate + L-aspartate. The sequence is that of Probable aspartoacylase from Prochlorococcus marinus (strain SARG / CCMP1375 / SS120).